A 214-amino-acid chain; its full sequence is Large ribosomal subunit protein uL3 (214 aa).

Residues 134–161 form a disordered region; the sequence is THGNSLSHRAPGSIGQCQTPGRVMKGKK. An N5-methylglutamine modification is found at glutamine 151.

Belongs to the universal ribosomal protein uL3 family. In terms of assembly, part of the 50S ribosomal subunit. Forms a cluster with proteins L14 and L19. In terms of processing, methylated by PrmB.

One of the primary rRNA binding proteins, it binds directly near the 3'-end of the 23S rRNA, where it nucleates assembly of the 50S subunit. This chain is Large ribosomal subunit protein uL3, found in Teredinibacter turnerae (strain ATCC 39867 / T7901).